Reading from the N-terminus, the 674-residue chain is Amino-acid acetyltransferase, mitochondrial (674 aa).

The transit peptide at 1 to 50 (MPLVAAMLTRSNGAWKKATSVVQASICRDQQRPNHTTITSVTSVSQRRHF) directs the protein to the mitochondrion. Polar residues predominate over residues 33 to 45 (PNHTTITSVTSVS). Residues 33–74 (PNHTTITSVTSVSQRRHFSSAENGAKPSRSHPSAAEAKQKRE) are disordered. In terms of domain architecture, N-acetyltransferase spans 497–665 (GTPRLKLTDT…YEDVCRGVVP (169 aa)).

The protein belongs to the acetyltransferase family.

The protein localises to the mitochondrion. It catalyses the reaction L-glutamate + acetyl-CoA = N-acetyl-L-glutamate + CoA + H(+). Its pathway is amino-acid biosynthesis; L-arginine biosynthesis; N(2)-acetyl-L-ornithine from L-glutamate: step 1/4. Its function is as follows. N-acetylglutamate synthase involved in arginine biosynthesis. This is Amino-acid acetyltransferase, mitochondrial (ARG2) from Podospora anserina (strain S / ATCC MYA-4624 / DSM 980 / FGSC 10383) (Pleurage anserina).